An 803-amino-acid polypeptide reads, in one-letter code: Ras GTPase-activating protein 4 (803 aa).

C2 domains follow at residues 1 to 105 (MAKR…SGWA) and 116 to 232 (VQGE…EGWF). Aspartate 21, aspartate 27, aspartate 74, aspartate 76, serine 79, aspartate 82, aspartate 149, aspartate 155, aspartate 202, aspartate 204, serine 207, and aspartate 210 together coordinate Ca(2+). Residues 318–546 (GLAKDFLDLL…AQLKDFITKL (229 aa)) form the Ras-GAP domain. The PH domain maps to 566-673 (PPVKEGPLFI…WLSALRKVSI (108 aa)). The segment at 675–711 (NTGLLGSYHPGVFRGDKWSCCHQKEKTGQGCDKTRSR) adopts a Btk-type zinc-finger fold. Zn(2+) contacts are provided by histidine 683, cysteine 694, cysteine 695, and cysteine 705. Residues 781-803 (EAHSSSPAGSPPSEPNCLLELQT) are disordered.

Ca(2+) serves as cofactor. As to expression, widely expressed.

It localises to the cytoplasm. The protein localises to the cytosol. It is found in the cell membrane. In terms of biological role, ca(2+)-dependent Ras GTPase-activating protein, that switches off the Ras-MAPK pathway following a stimulus that elevates intracellular calcium. Functions as an adaptor for Cdc42 and Rac1 during FcR-mediated phagocytosis. This chain is Ras GTPase-activating protein 4 (RASA4), found in Homo sapiens (Human).